Reading from the N-terminus, the 321-residue chain is Putative ribose-phosphate pyrophosphokinase 2 (321 aa).

Residues 43–45 and 102–103 contribute to the ATP site; these read DGE and RQ. Positions 136 and 176 each coordinate Mg(2+). D225 is a D-ribose 5-phosphate binding site.

Belongs to the ribose-phosphate pyrophosphokinase family. Class I subfamily. In terms of assembly, homohexamer. The cofactor is Mg(2+).

It is found in the cytoplasm. The enzyme catalyses D-ribose 5-phosphate + ATP = 5-phospho-alpha-D-ribose 1-diphosphate + AMP + H(+). It functions in the pathway metabolic intermediate biosynthesis; 5-phospho-alpha-D-ribose 1-diphosphate biosynthesis; 5-phospho-alpha-D-ribose 1-diphosphate from D-ribose 5-phosphate (route I): step 1/1. Its function is as follows. Involved in the biosynthesis of the central metabolite phospho-alpha-D-ribosyl-1-pyrophosphate (PRPP) via the transfer of pyrophosphoryl group from ATP to 1-hydroxyl of ribose-5-phosphate (Rib-5-P). This chain is Putative ribose-phosphate pyrophosphokinase 2, found in Lactiplantibacillus plantarum (strain ATCC BAA-793 / NCIMB 8826 / WCFS1) (Lactobacillus plantarum).